We begin with the raw amino-acid sequence, 534 residues long: Protein tweety homolog 2 (534 aa).

Over M1–T44 the chain is Extracellular. A helical membrane pass occupies residues L45–V65. Residues Y66 to C87 lie on the Cytoplasmic side of the membrane. A helical membrane pass occupies residues C88 to F108. The Extracellular segment spans residues Y109 to W213. Positions 113 and 116 each coordinate Ca(2+). A glycan (N-linked (GlcNAc...) asparagine) is linked at N129. The RGD motif lies at R164–D166. Residue N197 is glycosylated (N-linked (GlcNAc...) asparagine). The chain crosses the membrane as a helical span at residues L214–L234. The Cytoplasmic segment spans residues A235–C240. A helical membrane pass occupies residues L241–A261. Residues L262–G388 lie on the Extracellular side of the membrane. 2 cysteine pairs are disulfide-bonded: C274-C382 and C300-C367. N283 and N352 each carry an N-linked (GlcNAc...) asparagine glycan. A helical transmembrane segment spans residues M389 to A409. The Cytoplasmic portion of the chain corresponds to M410–A534.

Belongs to the tweety family. Forms cis-homodimers in the presence of Ca(+2) and forms monomers and trans-dimers in the absence of Ca(2+).

It is found in the cell membrane. The enzyme catalyses chloride(in) = chloride(out). It catalyses the reaction L-glutamate(out) = L-glutamate(in). In terms of biological role, may act as a calcium-independent, swelling-dependent volume-regulated anion channel (VRAC-swell) which plays a pivotal role in the process of regulatory volume decrease (RVD) in the brain through the efflux of anions like chloride and organic osmolytes like glutamate. Probable large-conductance Ca(2+)-activated chloride channel. The chain is Protein tweety homolog 2 (ttyh2) from Xenopus tropicalis (Western clawed frog).